The chain runs to 480 residues: Sestrin-2 (480 aa).

Position 1 is an N-acetylmethionine (M1). The segment at 20-45 (PGGVGDSGPGEEQRESRARRGPRGPS) is disordered. Residues 66–239 (GLEALMSSGR…APTPPSEQSS (174 aa)) are N-terminal domain; mediates the alkylhydroperoxide reductase activity. C125 acts as the Cysteine sulfenic acid (-SOH) intermediate in catalysis. Residue K175 forms a Glycyl lysine isopeptide (Lys-Gly) (interchain with G-Cter in ubiquitin) linkage. The interval 222–252 (ADGSPAPQAPTPPSEQSSPPSRDPLNNSGGF) is disordered. A Phosphoserine modification is found at S249. The interval 308 to 480 (PHPDMLCFVE…ALRAITRYMT (173 aa)) is C-terminal domain; mediates TORC1 regulation. Residues 374–377 (TYNT), T386, and E451 each bind L-leucine.

Belongs to the sestrin family. In terms of assembly, interacts with the GATOR2 complex which is composed of MIOS, SEC13, SEH1L, WDR24 and WDR59; the interaction is negatively regulated by leucine. Conveys leucine availability via direct interaction with SEH1L and WDR24 components of the GATOR2 complex. Interacts with RRAGA, RRAGB, RRAGC and RRAGD; may function as a guanine nucleotide dissociation inhibitor for RRAGs and regulate them. May interact with the TORC2 complex. Interacts with KEAP1, RBX1, SQSTM and ULK1; to regulate the degradation of KEAP1. May also associate with the complex composed of TSC1, TSC2 and the AMP-responsive protein kinase/AMPK to regulate TORC1 signaling. May interact with PRDX1. Phosphorylated by ULK1 at multiple sites. Post-translationally, ubiquitinated at Lys-175 by RNF167 via 'Lys-63'-linked polyubiquitination in response to leucine deprivation: ubiquitination promotes SESN2-interaction with the GATOR2 complex, leading to inhibit the TORC1 signaling pathway. Deubiquitinated at Lys-175 by STAMBPL1, promoting the TORC1 signaling pathway. Ubiquitinated by RNF186; ubiquitination mediates proteasomal degradation.

Its subcellular location is the cytoplasm. It catalyses the reaction a hydroperoxide + L-cysteinyl-[protein] = S-hydroxy-L-cysteinyl-[protein] + an alcohol. In terms of biological role, functions as an intracellular leucine sensor that negatively regulates the mTORC1 signaling pathway through the GATOR complex. In absence of leucine, binds the GATOR subcomplex GATOR2 and prevents mTORC1 signaling. Binding of leucine to SESN2 disrupts its interaction with GATOR2 thereby activating the TORC1 signaling pathway. This stress-inducible metabolic regulator also plays a role in protection against oxidative and genotoxic stresses. May negatively regulate protein translation in response to endoplasmic reticulum stress, via mTORC1. May positively regulate the transcription by NFE2L2 of genes involved in the response to oxidative stress by facilitating the SQSTM1-mediated autophagic degradation of KEAP1. May also mediate TP53 inhibition of TORC1 signaling upon genotoxic stress. Moreover, may prevent the accumulation of reactive oxygen species (ROS) through the alkylhydroperoxide reductase activity born by the N-terminal domain of the protein. Was originally reported to contribute to oxidative stress resistance by reducing PRDX1. However, this could not be confirmed. This chain is Sestrin-2, found in Pongo abelii (Sumatran orangutan).